The chain runs to 1171 residues: Pyruvate:ferredoxin oxidoreductase (1171 aa).

Pyruvate contacts are provided by Thr29 and Arg112. Residues 424-428 (SDGTV), Lys456, Asn556, and Asn598 each bind CoA. 2 consecutive 4Fe-4S ferredoxin-type domains span residues 677 to 706 (NIPQ…PYLA) and 733 to 764 (FRIQ…MVPL). The [4Fe-4S] cluster site is built by Cys686, Cys689, Cys692, Cys696, Cys742, Cys745, Cys748, Cys752, Cys809, and Cys812. Residues Glu814, Cys837, 967-969 (DGW), and 995-1000 (TEVYSN) contribute to the thiamine diphosphate site. A [4Fe-4S] cluster-binding site is contributed by Cys837. The Mg(2+) site is built by Asp967, Thr995, and Val997. Residue Asn1000 participates in pyruvate binding. A [4Fe-4S] cluster-binding site is contributed by Cys1075.

The protein belongs to the pyruvate:ferredoxin/flavodoxin oxidoreductase family. Homodimer. The cofactor is [4Fe-4S] cluster. Thiamine diphosphate serves as cofactor. It depends on Mg(2+) as a cofactor.

It carries out the reaction 2 oxidized [2Fe-2S]-[ferredoxin] + pyruvate + CoA = 2 reduced [2Fe-2S]-[ferredoxin] + acetyl-CoA + CO2 + H(+). Catalyzes the oxidative decarboxylation of pyruvate to acetyl-CoA and carbon dioxide. The two electrons that are generated as a result of pyruvate decarboxylation are used in the reduction of low potential ferredoxins, which provide reducing equivalents for central metabolism. Also catalyzes the reverse reaction, i.e. the synthesis of pyruvate from acetyl-CoA and carbon dioxide. Appears to function physiologically in both directions. The oxidation of pyruvate by PFOR is required to connect glycolysis and the Wood-Ljungdahl pathway of reductive acetogenesis. The conversion of acetyl-CoA to pyruvate links the Wood-Ljungdahl pathway of autotrophic CO2 fixation to the reductive tricarboxylic acid cycle. Can use methyl viologen as electron carrier in vitro. The protein is Pyruvate:ferredoxin oxidoreductase of Moorella thermoacetica (strain ATCC 39073 / JCM 9320).